The sequence spans 152 residues: Deoxyuridine 5'-triphosphate nucleotidohydrolase (152 aa).

Substrate is bound by residues 71-73, N84, 88-90, and M98; these read RSG and LID.

Belongs to the dUTPase family. It depends on Mg(2+) as a cofactor.

It carries out the reaction dUTP + H2O = dUMP + diphosphate + H(+). It functions in the pathway pyrimidine metabolism; dUMP biosynthesis; dUMP from dCTP (dUTP route): step 2/2. This enzyme is involved in nucleotide metabolism: it produces dUMP, the immediate precursor of thymidine nucleotides and it decreases the intracellular concentration of dUTP so that uracil cannot be incorporated into DNA. The chain is Deoxyuridine 5'-triphosphate nucleotidohydrolase from Haemophilus ducreyi (strain 35000HP / ATCC 700724).